The sequence spans 367 residues: Molybdopterin synthase catalytic subunit (367 aa).

Substrate-binding positions include 101–102 (HR), lysine 117, and 124–126 (KKE). The segment at 325-350 (RHFTKREPSSMEAAPPKKSRKKSYSA) is disordered.

This sequence belongs to the MoaE family. MOCS2B subfamily. As to quaternary structure, heterotetramer; composed of 2 small (Mocs2A) and 2 large (Mocs2B) subunits. Component of the Ada2a-containing (ATAC) complex composed of at least Ada2a, Atac1, Hcf, Ada3, Gcn5, Mocs2B, Charac-14, Atac3, Atac2, NC2beta and wds.

Its subcellular location is the cytoplasm. It localises to the nucleus. The enzyme catalyses 2 [molybdopterin-synthase sulfur-carrier protein]-C-terminal-Gly-aminoethanethioate + cyclic pyranopterin phosphate + H2O = molybdopterin + 2 [molybdopterin-synthase sulfur-carrier protein]-C-terminal Gly-Gly + 2 H(+). The protein operates within cofactor biosynthesis; molybdopterin biosynthesis. Its function is as follows. Catalytic subunit of the molybdopterin synthase complex, a complex that catalyzes the conversion of precursor Z into molybdopterin. Acts by mediating the incorporation of 2 sulfur atoms from thiocarboxylated Mocs2A into precursor Z to generate a dithiolene group. Involved during biosynthesis of the molybdenum cofactor. The sequence is that of Molybdopterin synthase catalytic subunit from Drosophila melanogaster (Fruit fly).